Consider the following 784-residue polypeptide: Toll-like receptor 2 (784 aa).

Positions Met-1–Glu-20 are cleaved as a signal peptide. The Extracellular segment spans residues Glu-21–Thr-588. Cysteines 30 and 36 form a disulfide. 19 LRR repeats span residues Val-54–Asn-77, Leu-78–Ser-101, Leu-102–Ser-125, Leu-126–Lys-150, Leu-151–Phe-175, Leu-176–Asn-199, Val-200–Ser-223, Val-224–Leu-250, Ile-251–Gly-278, Leu-279–Lys-308, Val-309–Arg-337, Val-338–Ser-361, Leu-362–Ser-388, Leu-389–Asn-414, Leu-415–Lys-437, Met-438–Lys-457, Thr-458–Gln-478, Leu-479–Met-500, and Leu-501–Thr-524. The N-linked (GlcNAc...) asparagine glycan is linked to Asn-114. The N-linked (GlcNAc...) asparagine glycan is linked to Asn-199. Cys-353 and Cys-382 are joined by a disulfide. The N-linked (GlcNAc...) asparagine glycan is linked to Asn-414. Cys-432 and Cys-454 are oxidised to a cystine. N-linked (GlcNAc...) asparagine glycosylation is present at Asn-442. One can recognise an LRRCT domain in the interval Leu-525–Arg-579. The helical transmembrane segment at Ala-589–Cys-609 threads the bilayer. The Cytoplasmic portion of the chain corresponds to His-610–Ser-784. In terms of domain architecture, TIR spans Ile-639–Ile-782. Lys-754 is covalently cross-linked (Glycyl lysine isopeptide (Lys-Gly) (interchain with G-Cter in ubiquitin)). The ATG16L1-binding motif motif lies at Tyr-761–Leu-778.

This sequence belongs to the Toll-like receptor family. Interacts with LY96, TLR1 and TLR6 (via extracellular domain). TLR2 seems to exist in heterodimers with either TLR1 or TLR6 before stimulation by the ligand. The heterodimers form bigger oligomers in response to their corresponding ligands as well as further heterotypic associations with other receptors such as CD14 and/or CD36. Binds MYD88 (via TIR domain). Interacts with TICAM1. Interacts with CNPY3. Interacts with ATG16L1. Interacts with PPP1R11. Interacts with TICAM2. Interacts with TIRAP. As to quaternary structure, (Microbial infection) Interacts with M.tuberculosis EsxA. In terms of assembly, (Microbial infection) Interacts with M.bovis MPB83. (Microbial infection) Interacts with Staphylococcus aureus protein SSL5. In terms of processing, glycosylation of Asn-442 is critical for secretion of the N-terminal ectodomain of TLR2. Post-translationally, ubiquitinated at Lys-754 by PPP1R11, leading to its degradation. Deubiquitinated by USP2. In terms of tissue distribution, highly expressed in peripheral blood leukocytes, in particular in monocytes, in bone marrow, lymph node and in spleen. Also detected in lung and in fetal liver. Levels are low in other tissues.

Its subcellular location is the membrane. It localises to the cytoplasmic vesicle. The protein localises to the phagosome membrane. It is found in the membrane raft. Cooperates with LY96 to mediate the innate immune response to bacterial lipoproteins and other microbial cell wall components. Cooperates with TLR1 or TLR6 to mediate the innate immune response to bacterial lipoproteins or lipopeptides. Acts via MYD88 and TRAF6, leading to NF-kappa-B activation, cytokine secretion and the inflammatory response. May also activate immune cells and promote apoptosis in response to the lipid moiety of lipoproteins. Recognizes mycoplasmal macrophage-activating lipopeptide-2kD (MALP-2), soluble tuberculosis factor (STF), phenol-soluble modulin (PSM) and B.burgdorferi outer surface protein A lipoprotein (OspA-L) cooperatively with TLR6. Stimulation of monocytes in vitro with M.tuberculosis PstS1 induces p38 MAPK and ERK1/2 activation primarily via this receptor, but also partially via TLR4. MAPK activation in response to bacterial peptidoglycan also occurs via this receptor. Acts as a receptor for M.tuberculosis lipoproteins LprA, LprG, LpqH and PstS1, some lipoproteins are dependent on other coreceptors (TLR1, CD14 and/or CD36); the lipoproteins act as agonists to modulate antigen presenting cell functions in response to the pathogen. M.tuberculosis HSP70 (dnaK) but not HSP65 (groEL-2) acts via this protein to stimulate NF-kappa-B expression. Recognizes M.tuberculosis major T-antigen EsxA (ESAT-6) which inhibits downstream MYD88-dependent signaling (shown in mouse). Forms activation clusters composed of several receptors depending on the ligand, these clusters trigger signaling from the cell surface and subsequently are targeted to the Golgi in a lipid-raft dependent pathway. Forms the cluster TLR2:TLR6:CD14:CD36 in response to diacylated lipopeptides and TLR2:TLR1:CD14 in response to triacylated lipopeptides. Required for normal uptake of M.tuberculosis, a process that is inhibited by M.tuberculosis LppM. In Homo sapiens (Human), this protein is Toll-like receptor 2.